The primary structure comprises 179 residues: Putative manganese efflux pump MntP (179 aa).

Helical transmembrane passes span 4 to 24, 39 to 59, 69 to 89, 102 to 122, 128 to 148, and 159 to 179; these read VLILAFALSMDAFAVSIGLGI, LFFGIFQALMPFLGFLGGIGL, IVAFILLLAIGGKMIYEAFNE, ILLTLAIATSLDAMAAGYSLH, IYLSLFVIGFTTFIISYIGVY, and SKAEILGGVVLILIGLKILLF.

Belongs to the MntP (TC 9.B.29) family.

It is found in the cell inner membrane. Its function is as follows. Probably functions as a manganese efflux pump. The sequence is that of Putative manganese efflux pump MntP from Aliarcobacter butzleri (strain RM4018) (Arcobacter butzleri).